The sequence spans 479 residues: Aspartyl/glutamyl-tRNA(Asn/Gln) amidotransferase subunit B (479 aa).

It belongs to the GatB/GatE family. GatB subfamily. Heterotrimer of A, B and C subunits.

It carries out the reaction L-glutamyl-tRNA(Gln) + L-glutamine + ATP + H2O = L-glutaminyl-tRNA(Gln) + L-glutamate + ADP + phosphate + H(+). The catalysed reaction is L-aspartyl-tRNA(Asn) + L-glutamine + ATP + H2O = L-asparaginyl-tRNA(Asn) + L-glutamate + ADP + phosphate + 2 H(+). Its function is as follows. Allows the formation of correctly charged Asn-tRNA(Asn) or Gln-tRNA(Gln) through the transamidation of misacylated Asp-tRNA(Asn) or Glu-tRNA(Gln) in organisms which lack either or both of asparaginyl-tRNA or glutaminyl-tRNA synthetases. The reaction takes place in the presence of glutamine and ATP through an activated phospho-Asp-tRNA(Asn) or phospho-Glu-tRNA(Gln). This Halorhodospira halophila (strain DSM 244 / SL1) (Ectothiorhodospira halophila (strain DSM 244 / SL1)) protein is Aspartyl/glutamyl-tRNA(Asn/Gln) amidotransferase subunit B.